A 222-amino-acid polypeptide reads, in one-letter code: UPF0502 protein Lcho_2066 (222 aa).

It belongs to the UPF0502 family.

This chain is UPF0502 protein Lcho_2066, found in Leptothrix cholodnii (strain ATCC 51168 / LMG 8142 / SP-6) (Leptothrix discophora (strain SP-6)).